The chain runs to 466 residues: 3-isopropylmalate dehydratase large subunit (466 aa).

Positions 346, 406, and 409 each coordinate [4Fe-4S] cluster.

This sequence belongs to the aconitase/IPM isomerase family. LeuC type 1 subfamily. In terms of assembly, heterodimer of LeuC and LeuD. Requires [4Fe-4S] cluster as cofactor.

It carries out the reaction (2R,3S)-3-isopropylmalate = (2S)-2-isopropylmalate. Its pathway is amino-acid biosynthesis; L-leucine biosynthesis; L-leucine from 3-methyl-2-oxobutanoate: step 2/4. In terms of biological role, catalyzes the isomerization between 2-isopropylmalate and 3-isopropylmalate, via the formation of 2-isopropylmaleate. This is 3-isopropylmalate dehydratase large subunit from Alteromonas mediterranea (strain DSM 17117 / CIP 110805 / LMG 28347 / Deep ecotype).